A 259-amino-acid polypeptide reads, in one-letter code: uncharacterized protein (259 aa).

It belongs to the ParA family.

This is an uncharacterized protein from Methanocaldococcus jannaschii (strain ATCC 43067 / DSM 2661 / JAL-1 / JCM 10045 / NBRC 100440) (Methanococcus jannaschii).